The following is a 455-amino-acid chain: MSDSGDAQPQDGGNSSSSRGKSPSVGNRVTVVLGAQWGDEGKGKVVDLLAQDADMVCRCQGGNNAGHTVVVDSVEYDFHLLPSGIINPKVTAFIGNGVVIHLPGLFEEAEKNVRKGKGLEGWESRLIISDRAHIVFDFHQAVDGVQEQERQQQAGKNLGTTKKGIGPVYSAKAARSGLRICDLLADFQEFSERFKHLASQYKSMYPSLEIDVDGELEKLKSYVDRIKPMVRDGVFFMYEALHGDPKRILVEGANAALLDIDFGTYPFVTSSNCTVGGVCTGLGMPPQNVGEVYGVVKAYTTRVGIGAFPTEQSNETGELLQTRGKEVGVTTGRKRRCGWLDLVLIKYAHMINGFTALALTKLDILDVLPEIKVGVAYKVNGETIPHFPANQEVLQKVEVEYETLPGWSTDTSAVRTFEELPENAKKYVCFIEDRLGVPVKWIGVGKSRESMIQLF.

Positions 1–25 (MSDSGDAQPQDGGNSSSSRGKSPSV) are disordered. Residues 12–25 (GGNSSSSRGKSPSV) are compositionally biased toward low complexity. GTP is bound by residues 38 to 44 (GDEGKGK) and 66 to 68 (GHT). The active-site Proton acceptor is Asp39. 2 residues coordinate Mg(2+): Asp39 and Gly66. Residue Asp39 participates in substrate binding. IMP is bound by residues 39–42 (DEGK), 64–67 (NAGH), Thr161, Arg175, Asn254, Thr269, and Arg333. His67 acts as the Proton donor in catalysis. Substrate is bound at residue 329-335 (VTTGRKR). Residues Arg335, 361 to 363 (KLD), and 443 to 446 (GVGK) each bind GTP.

This sequence belongs to the adenylosuccinate synthetase family. Homodimer. Mg(2+) serves as cofactor.

It localises to the cytoplasm. Its subcellular location is the mitochondrion. The enzyme catalyses IMP + L-aspartate + GTP = N(6)-(1,2-dicarboxyethyl)-AMP + GDP + phosphate + 2 H(+). It functions in the pathway purine metabolism; AMP biosynthesis via de novo pathway; AMP from IMP: step 1/2. Inhibited competitively by AMP and IMP and non-competitively by fructose 1,6-bisphosphate. Functionally, plays an important role in the de novo pathway and in the salvage pathway of purine nucleotide biosynthesis. Catalyzes the first committed step in the biosynthesis of AMP from IMP. This chain is Adenylosuccinate synthetase isozyme 2 (adss2), found in Danio rerio (Zebrafish).